Here is a 721-residue protein sequence, read N- to C-terminus: Methionine--tRNA ligase (721 aa).

The 'HIGH' region signature appears at 27–37 (PYANGQIHIGH). Zn(2+) contacts are provided by Cys158, Cys161, Cys171, and Cys174. Residues 348 to 352 (KMSKS) carry the 'KMSKS' region motif. ATP is bound at residue Lys351. Positions 615–721 (DFAKIDLRIA…SGAKPGMRVK (107 aa)) constitute a tRNA-binding domain.

The protein belongs to the class-I aminoacyl-tRNA synthetase family. MetG type 1 subfamily. Homodimer. Requires Zn(2+) as cofactor.

Its subcellular location is the cytoplasm. It catalyses the reaction tRNA(Met) + L-methionine + ATP = L-methionyl-tRNA(Met) + AMP + diphosphate. Functionally, is required not only for elongation of protein synthesis but also for the initiation of all mRNA translation through initiator tRNA(fMet) aminoacylation. The protein is Methionine--tRNA ligase of Burkholderia vietnamiensis (strain G4 / LMG 22486) (Burkholderia cepacia (strain R1808)).